The chain runs to 326 residues: GTP 3',8-cyclase (326 aa).

A Radical SAM core domain is found at Ala-7 to Gln-240. GTP is bound at residue Arg-16. [4Fe-4S] cluster is bound by residues Cys-23 and Cys-27. Residue Tyr-29 coordinates S-adenosyl-L-methionine. Cys-30 contacts [4Fe-4S] cluster. A GTP-binding site is contributed by Arg-65. Gly-69 provides a ligand contact to S-adenosyl-L-methionine. Residue Thr-96 participates in GTP binding. Position 120 (Ser-120) interacts with S-adenosyl-L-methionine. GTP is bound at residue Lys-157. An S-adenosyl-L-methionine-binding site is contributed by Met-191. Cys-254 and Cys-257 together coordinate [4Fe-4S] cluster. Arg-259–Arg-261 lines the GTP pocket. Cys-271 contacts [4Fe-4S] cluster.

This sequence belongs to the radical SAM superfamily. MoaA family. In terms of assembly, monomer and homodimer. [4Fe-4S] cluster serves as cofactor.

The enzyme catalyses GTP + AH2 + S-adenosyl-L-methionine = (8S)-3',8-cyclo-7,8-dihydroguanosine 5'-triphosphate + 5'-deoxyadenosine + L-methionine + A + H(+). The protein operates within cofactor biosynthesis; molybdopterin biosynthesis. In terms of biological role, catalyzes the cyclization of GTP to (8S)-3',8-cyclo-7,8-dihydroguanosine 5'-triphosphate. This chain is GTP 3',8-cyclase, found in Yersinia pestis.